Here is a 362-residue protein sequence, read N- to C-terminus: Peptide chain release factor 1 (362 aa).

N5-methylglutamine is present on Gln-237. The interval 279 to 305 is disordered; it reads RLQQAEDEKRRSEEESSRRNLVASGDR. The segment covering 282-296 has biased composition (basic and acidic residues); it reads QAEDEKRRSEEESSR.

It belongs to the prokaryotic/mitochondrial release factor family. In terms of processing, methylated by PrmC. Methylation increases the termination efficiency of RF1.

The protein resides in the cytoplasm. Peptide chain release factor 1 directs the termination of translation in response to the peptide chain termination codons UAG and UAA. This chain is Peptide chain release factor 1, found in Colwellia psychrerythraea (strain 34H / ATCC BAA-681) (Vibrio psychroerythus).